A 618-amino-acid chain; its full sequence is DNA mismatch repair protein MutL (618 aa).

The disordered stretch occupies residues 371 to 401; sequence AREPATPRYSGGASGGSGGRQSVGGWSHAQP. Gly residues predominate over residues 382–392; it reads GASGGSGGRQS.

It belongs to the DNA mismatch repair MutL/HexB family.

In terms of biological role, this protein is involved in the repair of mismatches in DNA. It is required for dam-dependent methyl-directed DNA mismatch repair. May act as a 'molecular matchmaker', a protein that promotes the formation of a stable complex between two or more DNA-binding proteins in an ATP-dependent manner without itself being part of a final effector complex. In Salmonella arizonae (strain ATCC BAA-731 / CDC346-86 / RSK2980), this protein is DNA mismatch repair protein MutL.